The following is a 376-amino-acid chain: Probable deoxyhypusine synthase (376 aa).

NAD(+) is bound by residues 105 to 109 (SNLVS), 131 to 133 (TAG), Glu137, and Asp238. A spermidine-binding site is contributed by 136–137 (EE). Spermidine is bound at residue Asp243. Gly283 serves as a coordination point for NAD(+). Residue His288 participates in spermidine binding. 308 to 309 (TG) is a binding site for NAD(+). Residues 314–316 (GSD) and 323–329 (EAVSWGK) contribute to the spermidine site. The Nucleophile role is filled by Lys329. 342 to 343 (EA) is an NAD(+) binding site.

Belongs to the deoxyhypusine synthase family. The cofactor is NAD(+).

It carries out the reaction [eIF5A protein]-L-lysine + spermidine = [eIF5A protein]-deoxyhypusine + propane-1,3-diamine. The protein operates within protein modification; eIF5A hypusination. Functionally, catalyzes the NAD-dependent oxidative cleavage of spermidine and the subsequent transfer of the butylamine moiety of spermidine to the epsilon-amino group of a critical lysine residue of the eIF-5A precursor protein to form the intermediate deoxyhypusine residue. This is the first step of the post-translational modification of that lysine into an unusual amino acid residue named hypusine. Hypusination is unique to mature eIF-5A factor and is essential for its function. This Dictyostelium discoideum (Social amoeba) protein is Probable deoxyhypusine synthase (dhps).